The chain runs to 761 residues: Autophagy-related protein 13 (761 aa).

3 stretches are compositionally biased toward low complexity: residues 1–10 (MLSDFKQQQQ), 290–303 (SSSVSPLSSGTSLK), and 327–340 (STSPPVQSPSISQP). 6 disordered regions span residues 1 to 25 (MLSDFKQQQQQKHHSHNPPNSHDDT), 277 to 367 (FHKR…SNKS), 398 to 456 (ISGT…QSDL), 488 to 507 (DLRLGGGGGGGNSSVHNMSI), 544 to 642 (HSSR…SSIS), and 691 to 761 (YQNV…SRNF). Composition is skewed to polar residues over residues 344-367 (PIQNQPSVPSSSLERRVSITSNKS) and 400-411 (GTSVPRSFSSST). A compositionally biased stretch (low complexity) spans 429 to 444 (RFASSFGSRASRRYSS). Residues 445–456 (TSIRQQTPQSDL) show a composition bias toward polar residues. Residues 566–590 (QQQQQQQQNQQQSQSPHTNTTSSIH) are compositionally biased toward low complexity. The span at 600-613 (RMKDARPRSEDHQQ) shows a compositional bias: basic and acidic residues. Over residues 614–631 (TKFSAARRSSNISPTTAV) the composition is skewed to polar residues. Over residues 632-642 (PSSIGTPSSIS) the composition is skewed to low complexity. Positions 695–709 (FDDDDEDDNDEEEGD) are enriched in acidic residues. The segment covering 710-720 (REGNQLHEGRN) has biased composition (basic and acidic residues). The span at 721–730 (STESSQNQSK) shows a compositional bias: polar residues.

Belongs to the ATG13 family. Fungi subfamily. As to quaternary structure, interacts with ATG1 to form the ATG1-ATG13 kinase complex.

The protein localises to the cytoplasm. It localises to the preautophagosomal structure. Functionally, plays a key role in autophagy. Activates the atg1 kinase in a nutritional condition dependent manner through the TOR pathway, leading to autophagy. Also involved in cytoplasm to vacuole transport (Cvt) and more specifically in Cvt vesicle formation. Seems to play a role in the switching machinery regulating the conversion between the Cvt pathway and autophagy. Finally, plays an important role in biofilm formation and resistance to antifungal compounds such as fluconazole, itraconazole, terbinafine and caspofungin. The chain is Autophagy-related protein 13 from Candida albicans (strain SC5314 / ATCC MYA-2876) (Yeast).